Reading from the N-terminus, the 458-residue chain is Elongation factor 1-alpha (458 aa).

Glycine 2 is subject to N,N,N-trimethylglycine. Lysine 3 carries the N6,N6-dimethyllysine; alternate modification. Residue lysine 3 is modified to N6-methyllysine; alternate. The region spanning 5 to 240 (KTHVNVVVIG…DAIEPPVRPS (236 aa)) is the tr-type G domain. The segment at 14–21 (GHVDSGKS) is G1. A GTP-binding site is contributed by 14–21 (GHVDSGKS). Lysine 30 carries the N6-methyllysine modification. The interval 70 to 74 (GITID) is G2. N6,N6,N6-trimethyllysine is present on lysine 79. The segment at 91-94 (DAPG) is G3. Residues 91-95 (DAPGH) and 153-156 (NKMD) contribute to the GTP site. Residues 153–156 (NKMD) are G4. The interval 192 to 194 (SGW) is G5. Lysine 316 bears the N6,N6-dimethyllysine; alternate mark. Lysine 316 carries the N6-methyllysine; alternate modification. The residue at position 390 (lysine 390) is an N6-methyllysine.

This sequence belongs to the TRAFAC class translation factor GTPase superfamily. Classic translation factor GTPase family. EF-Tu/EF-1A subfamily.

It localises to the cytoplasm. Functionally, this protein promotes the GTP-dependent binding of aminoacyl-tRNA to the A-site of ribosomes during protein biosynthesis. This Mucor circinelloides f. lusitanicus (Mucor racemosus var. lusitanicus) protein is Elongation factor 1-alpha (TEF-1).